The following is a 466-amino-acid chain: Ras GTPase-activating protein-binding protein 1 (466 aa).

The 123-residue stretch at Val-11 to Tyr-133 folds into the NTF2 domain. Glycyl lysine isopeptide (Lys-Gly) (interchain with G-Cter in ubiquitin) cross-links involve residues Lys-36, Lys-50, Lys-59, Lys-64, Lys-76, and Lys-123. An acidic disordered region region spans residues Val-142–Glu-225. Phosphothreonine is present on Thr-143. Disordered regions lie at residues Glu-144–Thr-172 and Glu-184–Gln-243. 2 stretches are compositionally biased toward acidic residues: residues Pro-145–Glu-157 and Glu-185–Pro-206. Position 149 is a phosphoserine (Ser-149). Phosphoserine is present on residues Ser-231, Ser-232, Ser-250, and Ser-253. Residues Thr-255–Glu-329 are disordered. Composition is skewed to basic and acidic residues over residues Pro-297–Arg-307 and Pro-318–Glu-329. The 76-residue stretch at His-340–Thr-415 folds into the RRM domain. Residues Lys-353 and Lys-357 each participate in a glycyl lysine isopeptide (Lys-Gly) (interchain with G-Cter in ubiquitin) cross-link. Phosphoserine is present on Ser-373. Residue Lys-376 forms a Glycyl lysine isopeptide (Lys-Gly) (interchain with G-Cter in ubiquitin) linkage. The residue at position 376 (Lys-376) is an N6-acetyllysine; alternate. Residue Lys-376 forms a Glycyl lysine isopeptide (Lys-Gly) (interchain with G-Cter in SUMO2); alternate linkage. A Glycyl lysine isopeptide (Lys-Gly) (interchain with G-Cter in ubiquitin); alternate cross-link involves residue Lys-393. Residues Val-410–Gln-466 form an RG-rich region region. Residues Lys-413 to Leu-428 show a composition bias toward basic and acidic residues. A disordered region spans residues Lys-413–Gln-466. Arg-429 carries the asymmetric dimethylarginine modification. Over residues Gly-430 to Arg-447 the composition is skewed to gly residues. Arg-435 is modified (asymmetric dimethylarginine; alternate). Omega-N-methylarginine; alternate is present on residues Arg-435, Arg-447, Arg-460, and Arg-465. Dimethylated arginine; alternate is present on Arg-460.

Homodimer and oligomer. Component of a TAU mRNP complex, at least composed of IGF2BP1, ELAVL4 and G3BP1. Binds to the SH3 domain of Ras GTPase-activating protein (RASA1) in proliferating cells. No interaction in quiescent cells. Interacts (via NTF2 domain) with USP10; inhibiting stress granule formation by lowering G3BP1 valence. Interacts (via NTF2 domain) with CAPRIN1; promoting stress granule formation by lowering the saturation-concentration of G3BP1. Interacts (via NTF2 domain) with UBAP2L; promoting stress granule formation. Associates (via RG-rich region) with 40S ribosome subunits. Interacts with RPTOR and SPAG5; this complex is increased by oxidative stress. Interacts with ATXN2L. Interacts with STYXL1. Interacts with CGAS (via N-terminus); this interaction promotes the DNA-binding and activation of CGAS. Interacts (via C-terminus) with RIGI. Interacts with PABPC1. Interacts with QKI (isoforms QKI6 and QKI7); directing N(7)-methylguanine-containing mRNAs to stress granules. The cofactor is Mg(2+). In terms of processing, phosphorylation of the acidic disordered region regulates stress granule assembly. RASA1-dependent phosphorylation of Ser-149 induces a conformational change that prevents self-association. Dephosphorylation after HRAS activation is required for stress granule assembly. Ser-149 phosphorylation induces partial nuclear localization. Arg-435 is dimethylated, probably to asymmetric dimethylarginine. Post-translationally, ubiquitinated by TRIM21 via 'Lys-63'-linked polyubiquitination in the NTF2 domain in response to heat shock, leading to stress granule disassembly: ubiquitination promotes interaction with the FAF2 adapter, followed by interaction with VCP, which extracts G3BP1 from stress granules, leading to stress granule disassembly. In case of prolonged stress, ubiquitination by TRIM21 leads to autophagy-dependent degradation of G3BP1 via recruitment of ubiquitinated G3BP1 by SQSTM1 and/or CALCOCO2 to autophagosomes.

The protein localises to the cytoplasm. Its subcellular location is the cytosol. The protein resides in the perikaryon. It localises to the stress granule. It is found in the nucleus. The enzyme catalyses ATP + H2O = ADP + phosphate + H(+). With respect to regulation, under physiological conditions, G3BP1 adopts a compact state that is stabilized by intramolecular interactions between the RG-rich and the acidic regions that inhibit phase separation. Upon stress, polysomes disassemble and mRNAs are released in an unfolded protein-free state. Binding of unfolded mRNA to G3BP1 outcompetes the intramolecular interactions and RNA-bound G3BP1 adopts an expanded conformation in which the RG-rich region becomes exposed to engage in protein-protein and protein-RNA interactions, allowing physical cross-linking of RNA molecules to form protein-RNA condensates, leading to liquid-liquid phase separation (LLPS). Protein involved in various processes, such as stress granule formation and innate immunity. Plays an essential role in stress granule formation. Stress granules are membraneless compartments that store mRNAs and proteins, such as stalled translation pre-initiation complexes, in response to stress. Promotes formation of stress granules phase-separated membraneless compartment by undergoing liquid-liquid phase separation (LLPS) upon unfolded RNA-binding: functions as a molecular switch that triggers RNA-dependent LLPS in response to a rise in intracellular free RNA concentrations. Also acts as an ATP- and magnesium-dependent helicase: unwinds DNA/DNA, RNA/DNA, and RNA/RNA substrates with comparable efficiency. Acts unidirectionally by moving in the 5' to 3' direction along the bound single-stranded DNA. Unwinds preferentially partial DNA and RNA duplexes having a 17 bp annealed portion and either a hanging 3' tail or hanging tails at both 5'- and 3'-ends. Plays an essential role in innate immunity by promoting CGAS and RIGI activity. Participates in the DNA-triggered cGAS/STING pathway by promoting the DNA binding and activation of CGAS. Triggers the condensation of cGAS, a process probably linked to the formation of membrane-less organelles. Also enhances RIGI-induced type I interferon production probably by helping RIGI at sensing pathogenic RNA. May also act as a phosphorylation-dependent sequence-specific endoribonuclease in vitro: Cleaves exclusively between cytosine and adenine and cleaves MYC mRNA preferentially at the 3'-UTR. The polypeptide is Ras GTPase-activating protein-binding protein 1 (G3BP1) (Pongo abelii (Sumatran orangutan)).